The sequence spans 389 residues: Terminal nucleotidyltransferase 5D (389 aa).

This sequence belongs to the TENT family. In terms of tissue distribution, restricted to testis.

The catalysed reaction is RNA(n) + ATP = RNA(n)-3'-adenine ribonucleotide + diphosphate. Its function is as follows. Catalyzes the transfer of one adenosine molecule from an ATP to an mRNA poly(A) tail bearing a 3'-OH terminal group. The sequence is that of Terminal nucleotidyltransferase 5D from Homo sapiens (Human).